The chain runs to 1010 residues: Pre-mRNA-splicing factor cwc22 (1010 aa).

Over residues 1–10 the composition is skewed to polar residues; it reads MASADMSPSR. The interval 1-166 is disordered; it reads MASADMSPSR…RTPTPPPVAV (166 aa). Residues 18–28 show a composition bias toward low complexity; sequence RSPSPRTQSPS. 2 stretches are compositionally biased toward basic and acidic residues: residues 29–39 and 65–78; these read PRDEDGSRSPG and PRRDRSLSPRDQPH. Residues 84-109 are compositionally biased toward low complexity; that stretch reads RSPTPRSQSPSRRSVRSPSPRQGSPA. Positions 142–158 are enriched in basic and acidic residues; it reads RHRDAGGDYRPVRKERT. An MIF4G domain is found at 222-405; that stretch reads KKSVNGLVNK…EVLFQVRKDK (184 aa). A disordered region spans residues 466–498; that stretch reads GEASDDDEDDDDDDESESGSESEDEEQKALEIK. Over residues 468 to 491 the composition is skewed to acidic residues; it reads ASDDDEDDDDDDESESGSESEDEE. The region spanning 507–623 is the MI domain; the sequence is NLRRTIYLSI…GWHVFSVIHL (117 aa). A disordered region spans residues 708-1010; that stretch reads LPAPPADSDS…SPVAKRGRVD (303 aa). The span at 718–732 shows a compositional bias: low complexity; that stretch reads ESVSSYSSYSSYSSR. The span at 753–775 shows a compositional bias: basic residues; that stretch reads PPRRGRGRSYSRTPSRSRSRSRS. Low complexity predominate over residues 776 to 787; it reads YSRSVSKSVSRS. Basic residues-rich tracts occupy residues 834–846 and 899–910; these read RRGRSGTRSRSRS and RLRRGSYSRSRS. The segment covering 911–935 has biased composition (low complexity); it reads RSPIPIRGNGPAGRDTGRAGPAPAR. Over residues 936–948 the composition is skewed to basic residues; sequence GGRRNRSYSRSRT. Over residues 961 to 973 the composition is skewed to low complexity; that stretch reads SRRVVSRSPSPVV. The span at 976-1010 shows a compositional bias: basic residues; it reads NKRRRSYSSSRSRSRSSSRSRYRSRSPVAKRGRVD.

This sequence belongs to the CWC22 family. In terms of assembly, associated with the spliceosome.

The protein resides in the cytoplasm. It is found in the nucleus. Involved in pre-mRNA splicing. This is Pre-mRNA-splicing factor cwc22 (msp-1) from Neurospora crassa (strain ATCC 24698 / 74-OR23-1A / CBS 708.71 / DSM 1257 / FGSC 987).